Consider the following 270-residue polypeptide: 5-amino-6-(5-phospho-D-ribitylamino)uracil phosphatase YitU (270 aa).

The active-site Nucleophile is Asp11. Asp11 is a binding site for Mg(2+). Leu12 is a phosphate binding site. Asp13 contacts Mg(2+). Residues 45-46 (TG) and Lys197 contribute to the phosphate site. Position 220 (Asp220) interacts with Mg(2+). Asn223 serves as a coordination point for phosphate.

The protein belongs to the HAD-like hydrolase superfamily. Cof family. Requires Mg(2+) as cofactor.

It carries out the reaction 5-amino-6-(5-phospho-D-ribitylamino)uracil + H2O = 5-amino-6-(D-ribitylamino)uracil + phosphate. It functions in the pathway cofactor biosynthesis; riboflavin biosynthesis; 5-amino-6-(D-ribitylamino)uracil from GTP: step 4/4. Its function is as follows. Catalyzes the dephosphorylation of the riboflavin precursor 5-amino-6-(5-phospho-D-ribitylamino)uracil and of flavin mononucleotide (FMN) in vitro. This chain is 5-amino-6-(5-phospho-D-ribitylamino)uracil phosphatase YitU (yitU), found in Bacillus subtilis (strain 168).